We begin with the raw amino-acid sequence, 234 residues long: Protein spitz (234 aa).

The signal sequence occupies residues 1–28; sequence MHSTMSVQHGLVALVLIGCLAHPWHVEA. The Lumenal segment spans residues 29–143; it reads CSSRTVPKPR…RPRPMLEKAS (115 aa). A disordered region spans residues 33 to 71; that stretch reads TVPKPRSSISSSMSGTALPPTQAPVTSSTTMRTTTTTTP. Residues 56–71 show a composition bias toward low complexity; it reads PVTSSTTMRTTTTTTP. N74 carries an N-linked (GlcNAc...) asparagine glycan. In terms of domain architecture, EGF-like spans 78 to 122; the sequence is PTYKCPETFDAWYCLNDAHCFAVKIADLPVYSCECAIGFMGQRCE. 3 cysteine pairs are disulfide-bonded: C82–C97, C91–C110, and C112–C121. A helical transmembrane segment spans residues 144–164; it reads IASGAMCALVFMLFVCLAFYL. Residues 165-234 lie on the Cytoplasmic side of the membrane; it reads RFEQRAAKKA…SFAIRRSNKL (70 aa).

In terms of assembly, interacts with Star via the lumenal domain. Proteolytic processing by Rhomboid occurs in the Golgi. Cleavage takes place within the transmembrane domain close to residue 144 and the active growth factor is released. Post-translationally, N-glycosylated and O-glycosylated. In terms of tissue distribution, expressed throughout the embryo.

It is found in the cell membrane. The protein localises to the endoplasmic reticulum membrane. Its subcellular location is the golgi apparatus membrane. Ligand for the EGF receptor (Gurken). Involved in a number of unrelated developmental choices, for example, dorsal-ventral axis formation, glial migration, sensory organ determination, and muscle development. It is required for photoreceptor determination. In Drosophila melanogaster (Fruit fly), this protein is Protein spitz (spi).